The sequence spans 409 residues: DNA double-strand break repair protein Mre11 (409 aa).

Mn(2+)-binding residues include Asp-9, His-11, Asp-50, and Glu-85. The active-site Proton donor is the His-86. Residues His-170, His-199, and His-201 each contribute to the Mn(2+) site.

The protein belongs to the MRE11/RAD32 family. In terms of assembly, homodimer. Forms a heterotetramer composed of two Mre11 subunits and two Rad50 subunits. It depends on Mn(2+) as a cofactor.

Its activity is regulated as follows. Nuclease activity is regulated by Rad50. Part of the Rad50/Mre11 complex, which is involved in the early steps of DNA double-strand break (DSB) repair. The complex may facilitate opening of the processed DNA ends to aid in the recruitment of HerA and NurA. Mre11 binds to DSB ends and has both double-stranded 3'-5' exonuclease activity and single-stranded endonuclease activity. The protein is DNA double-strand break repair protein Mre11 of Aeropyrum pernix (strain ATCC 700893 / DSM 11879 / JCM 9820 / NBRC 100138 / K1).